A 136-amino-acid chain; its full sequence is Ubiquinol-cytochrome c reductase complex assembly factor 2 (136 aa).

The N-terminal 13 residues, Met-1–Cys-13, are a transit peptide targeting the mitochondrion. Positions Lys-114–Thr-136 are disordered.

As to quaternary structure, interacts with UQCC1. Forms a complex, named COMB/coordinator of mitochondrial CYTB biogenesis, composed of UQCC1, UQCC2, UQCC4, UQCC5 and UQCC6; stabilizes nascent cytochrome b/MT-CYB and promotes its membrane insertion. Forms a complex, named COMB/coordinator of mitochondrial CYTB biogenesis, composed of UQCC1, UQCC2, UQCC4, UQCC5 and UQCC6; stabilizes nascent cytochrome b/MT-CYB and promotes its membrane insertion. Forms a complex, named COMA, composed of UQCC1, UQCC2 and UQCC4; activates MT-CYB translation. Forms a complex, named COMC, composed of UQCC1, UQCC2; UQCC3 and UQCC4; mediates MT-CYB hemylation and association with the first nuclear-encoded CIII subunit UQCRQ.

The protein localises to the mitochondrion matrix. Its subcellular location is the mitochondrion nucleoid. The protein resides in the mitochondrion. It is found in the mitochondrion intermembrane space. It localises to the mitochondrion inner membrane. Functionally, required for the assembly of the ubiquinol-cytochrome c reductase complex (mitochondrial respiratory chain complex III or cytochrome b-c1 complex). Plays a role in the modulation of respiratory chain activities such as oxygen consumption and ATP production and via its modulation of the respiratory chain activity can regulate skeletal muscle differentiation and insulin secretion by pancreatic beta-cells. Involved in cytochrome b translation and/or stability. This Bos taurus (Bovine) protein is Ubiquinol-cytochrome c reductase complex assembly factor 2 (UQCC2).